Reading from the N-terminus, the 315-residue chain is Aspartate carbamoyltransferase catalytic subunit (315 aa).

Carbamoyl phosphate is bound by residues Arg64 and Thr65. Lys92 lines the L-aspartate pocket. The carbamoyl phosphate site is built by Arg114, His142, and Gln145. Arg175 and Arg229 together coordinate L-aspartate. Carbamoyl phosphate contacts are provided by Gly270 and Pro271.

The protein belongs to the aspartate/ornithine carbamoyltransferase superfamily. ATCase family. In terms of assembly, heterododecamer (2C3:3R2) of six catalytic PyrB chains organized as two trimers (C3), and six regulatory PyrI chains organized as three dimers (R2).

It carries out the reaction carbamoyl phosphate + L-aspartate = N-carbamoyl-L-aspartate + phosphate + H(+). Its pathway is pyrimidine metabolism; UMP biosynthesis via de novo pathway; (S)-dihydroorotate from bicarbonate: step 2/3. Catalyzes the condensation of carbamoyl phosphate and aspartate to form carbamoyl aspartate and inorganic phosphate, the committed step in the de novo pyrimidine nucleotide biosynthesis pathway. This is Aspartate carbamoyltransferase catalytic subunit from Xanthobacter autotrophicus (strain ATCC BAA-1158 / Py2).